A 492-amino-acid chain; its full sequence is MAKINQSVIAQILKAIGNANNVAQCGNCMTRLRLTLRDSTQVDKVALKQIPNVLGIIESDDQFQIVLGPGKAQAAAEIMNELLNSSTPTAQSKPSDTHLANIASANKKQLKEKQVSAVHKFLTKFATIFTPLIPGFIAVGLLLGFATLLEQITIQGVEHPNTILVEIIGYMKVFSKGMFSFLSILIGYNAQKAFGGSGINGAIIASLFVLSYNPDATSGFYSGISTFFGYSIDPRGNIIGVLIAAILGAWVERQVRKIIPDNLDMILTSAITLLIMGAIAFIFIMPLGSYLFSGMSWLFLHLNGNPFGTAILAGLFLLAVMFGVHQGFVPVYFALMEAQGFNSLFPILAMAGGGQVGAALALYVKAKKDSLLRTQIKGAIIPGLLGIGEPLIYGVTLPRIKPFITACLGGAAGGFFIGLIAYLGLPVGLNTVFGPSGLVALPLMTSNNGIFVGMAVYAAGLVVAYISGFVLTLIFGSKKIEVLKADVQSQKE.

The PTS EIIB type-1 domain occupies 1–89 (MAKINQSVIA…NELLNSSTPT (89 aa)). Catalysis depends on Cys28, which acts as the Phosphocysteine intermediate; for EIIB activity. Residues 123–487 (TKFATIFTPL…KKIEVLKADV (365 aa)) form the PTS EIIC type-1 domain. The next 10 membrane-spanning stretches (helical) occupy residues 125–145 (FATIFTPLIPGFIAVGLLLGF), 167–187 (IIGYMKVFSKGMFSFLSILIG), 193–213 (AFGGSGINGAIIASLFVLSYN), 227–247 (FFGYSIDPRGNIIGVLIAAIL), 265–285 (MILTSAITLLIMGAIAFIFIM), 311–331 (ILAGLFLLAVMFGVHQGFVPV), 344–364 (LFPILAMAGGGQVGAALALYV), 378–398 (GAIIPGLLGIGEPLIYGVTLP), 403–423 (FITACLGGAAGGFFIGLIAYL), and 450–470 (IFVGMAVYAAGLVVAYISGFV).

It is found in the cell inner membrane. It carries out the reaction N-acetyl-beta-D-muramate(out) + N(pros)-phospho-L-histidyl-[protein] = N-acetyl-beta-D-muramate 6-phosphate(in) + L-histidyl-[protein]. The phosphoenolpyruvate-dependent sugar phosphotransferase system (sugar PTS), a major carbohydrate active transport system, catalyzes the phosphorylation of incoming sugar substrates concomitantly with their translocation across the cell membrane. This system is involved in N-acetylmuramic acid (MurNAc) transport, yielding cytoplasmic MurNAc-6-P. Is also able to take up anhydro-N-acetylmuramic acid (anhMurNAc), but cannot phosphorylate the carbon 6, probably because of the 1,6-anhydro ring. This Photorhabdus laumondii subsp. laumondii (strain DSM 15139 / CIP 105565 / TT01) (Photorhabdus luminescens subsp. laumondii) protein is PTS system N-acetylmuramic acid-specific EIIBC component (murP).